The primary structure comprises 275 residues: ATP synthase subunit a (275 aa).

Transmembrane regions (helical) follow at residues 46 to 66 (RLML…VIAM), 104 to 124 (FLPV…ASII), 135 to 155 (IGMP…VGIK), 166 to 186 (SIVV…IEFI), 204 to 224 (MLAG…FFFV), 231 to 251 (IFGV…LLVI), and 252 to 272 (FLQA…ALHA).

Belongs to the ATPase A chain family. In terms of assembly, F-type ATPases have 2 components, CF(1) - the catalytic core - and CF(0) - the membrane proton channel. CF(1) has five subunits: alpha(3), beta(3), gamma(1), delta(1), epsilon(1). CF(0) has three main subunits: a(1), b(2) and c(9-12). The alpha and beta chains form an alternating ring which encloses part of the gamma chain. CF(1) is attached to CF(0) by a central stalk formed by the gamma and epsilon chains, while a peripheral stalk is formed by the delta and b chains.

It localises to the cell membrane. Functionally, key component of the proton channel; it plays a direct role in the translocation of protons across the membrane. The polypeptide is ATP synthase subunit a (Rhodococcus erythropolis (strain PR4 / NBRC 100887)).